Here is an 88-residue protein sequence, read N- to C-terminus: Small integral membrane protein 13 (88 aa).

The helical transmembrane segment at 10 to 30 (LVFVATLLIVLLLMVCGWYFV) threads the bilayer. The segment covering 48–61 (TGSQEGDNEQPSGS) has biased composition (polar residues). Positions 48–88 (TGSQEGDNEQPSGSETEEDPSASPQKIRSARQRRPPVDAGH) are disordered. A phosphoserine mark is found at Ser59 and Ser61. Phosphothreonine is present on Thr63. Ser70 bears the Phosphoserine mark.

The protein belongs to the SMIM13 family.

The protein localises to the membrane. This Mus musculus (Mouse) protein is Small integral membrane protein 13 (Smim13).